The following is a 574-amino-acid chain: UvrABC system protein C (574 aa).

The GIY-YIG domain maps to 12-92 (KKPGVYIFKN…IYIHKPKYNI (81 aa)). The 36-residue stretch at 200 to 235 (EEVKNYLQKAMMDYAKIKNYEKAAQMRDTLFKLENL) folds into the UVR domain.

It belongs to the UvrC family. In terms of assembly, interacts with UvrB in an incision complex.

Its subcellular location is the cytoplasm. Its function is as follows. The UvrABC repair system catalyzes the recognition and processing of DNA lesions. UvrC both incises the 5' and 3' sides of the lesion. The N-terminal half is responsible for the 3' incision and the C-terminal half is responsible for the 5' incision. The sequence is that of UvrABC system protein C from Petrotoga mobilis (strain DSM 10674 / SJ95).